The sequence spans 203 residues: Leucyl/phenylalanyl-tRNA--protein transferase (203 aa).

The protein belongs to the L/F-transferase family.

The protein localises to the cytoplasm. It catalyses the reaction N-terminal L-lysyl-[protein] + L-leucyl-tRNA(Leu) = N-terminal L-leucyl-L-lysyl-[protein] + tRNA(Leu) + H(+). It carries out the reaction N-terminal L-arginyl-[protein] + L-leucyl-tRNA(Leu) = N-terminal L-leucyl-L-arginyl-[protein] + tRNA(Leu) + H(+). The catalysed reaction is L-phenylalanyl-tRNA(Phe) + an N-terminal L-alpha-aminoacyl-[protein] = an N-terminal L-phenylalanyl-L-alpha-aminoacyl-[protein] + tRNA(Phe). Functions in the N-end rule pathway of protein degradation where it conjugates Leu, Phe and, less efficiently, Met from aminoacyl-tRNAs to the N-termini of proteins containing an N-terminal arginine or lysine. In Chelativorans sp. (strain BNC1), this protein is Leucyl/phenylalanyl-tRNA--protein transferase.